The sequence spans 253 residues: Imidazole glycerol phosphate synthase subunit HisF (253 aa).

Catalysis depends on residues D11 and D130.

Belongs to the HisA/HisF family. As to quaternary structure, heterodimer of HisH and HisF.

It is found in the cytoplasm. The enzyme catalyses 5-[(5-phospho-1-deoxy-D-ribulos-1-ylimino)methylamino]-1-(5-phospho-beta-D-ribosyl)imidazole-4-carboxamide + L-glutamine = D-erythro-1-(imidazol-4-yl)glycerol 3-phosphate + 5-amino-1-(5-phospho-beta-D-ribosyl)imidazole-4-carboxamide + L-glutamate + H(+). It functions in the pathway amino-acid biosynthesis; L-histidine biosynthesis; L-histidine from 5-phospho-alpha-D-ribose 1-diphosphate: step 5/9. IGPS catalyzes the conversion of PRFAR and glutamine to IGP, AICAR and glutamate. The HisF subunit catalyzes the cyclization activity that produces IGP and AICAR from PRFAR using the ammonia provided by the HisH subunit. The sequence is that of Imidazole glycerol phosphate synthase subunit HisF from Dehalococcoides mccartyi (strain ATCC BAA-2266 / KCTC 15142 / 195) (Dehalococcoides ethenogenes (strain 195)).